Consider the following 256-residue polypeptide: Low molecular mass lipoprotein PBMHP-6 (256 aa).

The first 19 residues, 1-19 (MRLTLFAFVLAVCALASNA), serve as a signal peptide directing secretion.

Belongs to the 30 kDa lipoprotein family.

The protein localises to the secreted. This is Low molecular mass lipoprotein PBMHP-6 from Bombyx mori (Silk moth).